The following is a 329-amino-acid chain: Serpentine receptor class alpha-6 (329 aa).

7 helical membrane-spanning segments follow: residues Val-26 to Ile-46, Leu-68 to Leu-88, Tyr-104 to Ile-124, Ile-143 to Leu-163, Asn-187 to Ile-207, Ile-238 to Ile-258, and Phe-273 to Ile-293.

This sequence belongs to the nematode receptor-like protein sra family.

Its subcellular location is the membrane. This Caenorhabditis elegans protein is Serpentine receptor class alpha-6 (sra-6).